The primary structure comprises 675 residues: PTS system glucose-specific EIICBA component (675 aa).

The region spanning 3–414 (KKFFGQLQRI…FNFKTPGRED (412 aa)) is the PTS EIIC type-1 domain. Transmembrane regions (helical) follow at residues 16–36 (LMLPVAILPAAGLLLALGNAF), 63–83 (AGGIIFDNLAIIFALGVAIGL), 89–109 (VAAIAAFVGFIVLNKTMGMFL), 126–146 (VLGIPTLQTGVFGGIIIGALA), 170–190 (FVPIMMATCSFILAFPMAIIW), 199–219 (AFSEGLLASNTGLAVFLFGFI), 273–293 (FMQGEFPVMMFGLPAAALAIY), 303–323 (VVAGLMLSGALTSFLTGITEP), 329–349 (LFVAPLLFFIHAVLDGLSFLI), 355–375 (LHLGYTFSGGFIDFFLLGILP), and 383–403 (VIPVGLVYAAIYYIIFRFLIV). One can recognise a PTS EIIB type-1 domain in the interval 425-506 (SELPFKVLDA…QQIMDGKITS (82 aa)). Cysteine 447 serves as the catalytic Phosphocysteine intermediate; for EIIB activity. The region spanning 547–651 (DKVFSEKMMG…STITPIVVTN (105 aa)) is the PTS EIIA type-1 domain. The Tele-phosphohistidine intermediate; for EIIA activity role is filled by histidine 599.

It is found in the cell membrane. The enzyme catalyses N(pros)-phospho-L-histidyl-[protein] + D-glucose(out) = D-glucose 6-phosphate(in) + L-histidyl-[protein]. Inhibited by 2-deoxyglucose and methyl beta-D-glucoside, but not by methyl alpha-D-glucoside, p-nitrophenyl alpha-D-glucoside, o-nitrophenyl beta-D-glucoside and salicin. The phosphoenolpyruvate-dependent sugar phosphotransferase system (sugar PTS), a major carbohydrate active transport system, catalyzes the phosphorylation of incoming sugar substrates concomitantly with their translocation across the cell membrane. This system is involved in glucose transport. Cannot transport galactose, fructose, mannose, cellobiose, sucrose, maltose, lactose, melibiose and trehalose, as well as N-acetylglucosamine. This Staphylococcus carnosus (strain TM300) protein is PTS system glucose-specific EIICBA component (ptsG).